The chain runs to 300 residues: Glycine--tRNA ligase alpha subunit (300 aa).

It belongs to the class-II aminoacyl-tRNA synthetase family. In terms of assembly, tetramer of two alpha and two beta subunits.

It localises to the cytoplasm. The enzyme catalyses tRNA(Gly) + glycine + ATP = glycyl-tRNA(Gly) + AMP + diphosphate. In Pseudoalteromonas translucida (strain TAC 125), this protein is Glycine--tRNA ligase alpha subunit.